Consider the following 440-residue polypeptide: Ribosomal protein uS12 methylthiotransferase RimO (440 aa).

One can recognise an MTTase N-terminal domain in the interval 2-117 (VKVGFVSLGC…LPNVIKKLYE (116 aa)). 6 residues coordinate [4Fe-4S] cluster: Cys-11, Cys-47, Cys-80, Cys-156, Cys-160, and Cys-163. In terms of domain architecture, Radical SAM core spans 142–371 (ATPKFYAYIK…LNLQRKISLE (230 aa)). In terms of domain architecture, TRAM spans 374–440 (RKRISKKYEV…FEYDLVGEVI (67 aa)).

This sequence belongs to the methylthiotransferase family. RimO subfamily. It depends on [4Fe-4S] cluster as a cofactor.

It is found in the cytoplasm. It carries out the reaction L-aspartate(89)-[ribosomal protein uS12]-hydrogen + (sulfur carrier)-SH + AH2 + 2 S-adenosyl-L-methionine = 3-methylsulfanyl-L-aspartate(89)-[ribosomal protein uS12]-hydrogen + (sulfur carrier)-H + 5'-deoxyadenosine + L-methionine + A + S-adenosyl-L-homocysteine + 2 H(+). Catalyzes the methylthiolation of an aspartic acid residue of ribosomal protein uS12. The polypeptide is Ribosomal protein uS12 methylthiotransferase RimO (Caldicellulosiruptor saccharolyticus (strain ATCC 43494 / DSM 8903 / Tp8T 6331)).